A 1620-amino-acid chain; its full sequence is ALK tyrosine kinase receptor (1620 aa).

Residues 1 to 18 (MGAIGLLWLLPLLLSTAA) form the signal peptide. Residues 19-1038 (VGSGMGTGQR…PHLPLSLILS (1020 aa)) are Extracellular-facing. The heparin-binding region stretch occupies residues 48-70 (RLQRKSLAVDFVVPSLFRVYARD). N-linked (GlcNAc...) asparagine glycans are attached at residues Asn169, Asn244, Asn285, Asn324, Asn411, Asn424, Asn445, Asn563, Asn571, and Asn627. An MAM 1 domain is found at 264–427 (LECSFDFPCE…DFFALKNCSE (164 aa)). The 37-residue stretch at 437–473 (LQSSFTCWNGTVLQLGQACDFHQDCAQGEDESQMCRK) folds into the LDL-receptor class A domain. The MAM 2 domain maps to 478-636 (FYCNFEDGFC…NISISLDCYL (159 aa)). The segment at 650–674 (PKSRNLFERNPNKELKPGENSPRQT) is disordered. A compositionally biased stretch (basic and acidic residues) spans 654 to 666 (NLFERNPNKELKP). An intrachain disulfide couples Cys688 to Cys701. Residue Asn709 is glycosylated (N-linked (GlcNAc...) asparagine). The cysteines at positions 783 and 794 are disulfide-linked. Residues Asn808, Asn863, Asn864, and Asn886 are each glycosylated (N-linked (GlcNAc...) asparagine). An intrachain disulfide couples Cys906 to Cys928. N-linked (GlcNAc...) asparagine glycosylation occurs at Asn986. Intrachain disulfides connect Cys987–Cys995, Cys990–Cys1006, and Cys1008–Cys1021. Residues 987–1025 (CSHCEVDECHMDPESHKVICFCDHGTVLAEDGVSCIVSP) form an EGF-like region. The helical transmembrane segment at 1039 to 1059 (VVTSALVAALVLAFSGIMIVY) threads the bilayer. The Cytoplasmic portion of the chain corresponds to 1060–1620 (RRKHQELQAM…SKNSMNQPGP (561 aa)). 3 positions are modified to phosphotyrosine: Tyr1078, Tyr1092, and Tyr1096. In terms of domain architecture, Protein kinase spans 1116 to 1392 (ITLIRGLGHG…IEYCTQDPDV (277 aa)). Residue His1124 participates in ATP binding. A Phosphotyrosine modification is found at Tyr1131. ATP contacts are provided by residues Lys1150 and 1197 to 1199 (ELM). The active-site Proton acceptor is the Asp1249. Asp1270 is a binding site for ATP. Position 1278 is a phosphotyrosine (Tyr1278). The disordered stretch occupies residues 1408-1463 (EEKVPVRPKDPEGVPPLLVSQQAKREEERSPAAPPPLPTTSSGKAAKKPTAAEISV). The segment covering 1410–1419 (KVPVRPKDPE) has biased composition (basic and acidic residues). At Tyr1507 the chain carries Phosphotyrosine. The interval 1514–1540 (KPTKKNNPIAKKEPHDRGNLGLEGSCT) is disordered. A Phosphotyrosine modification is found at Tyr1604.

This sequence belongs to the protein kinase superfamily. Tyr protein kinase family. Insulin receptor subfamily. As to quaternary structure, homodimer; homodimerizes following heparin- and ligand-binding. Interacts with CBL, IRS1, PIK3R1 and PLCG1. Interacts with FRS2 and SHC1. Interacts with PTN and MDK. Phosphorylated at tyrosine residues by autocatalysis, which activates kinase activity. In cells not stimulated by a ligand, receptor protein tyrosine phosphatase beta and zeta complex (PTPRB/PTPRZ1) dephosphorylates ALK at the sites in ALK that are undergoing autophosphorylation through autoactivation. Phosphorylation at Tyr-1507 is critical for SHC1 association. Post-translationally, N-glycosylated. Expressed in brain and CNS. Also expressed in the small intestine and testis, but not in normal lymphoid cells.

The protein resides in the cell membrane. The catalysed reaction is L-tyrosyl-[protein] + ATP = O-phospho-L-tyrosyl-[protein] + ADP + H(+). Activated upon ALKAL2 ligand-binding. ALKAL2-driven activation is coupled with heparin-binding. Following ligand-binding, homodimerizes and autophosphorylates, activating its kinase activity. Inactivated through dephosphorylation by receptor protein tyrosine phosphatase beta and zeta complex (PTPRB/PTPRZ1) when there is no stimulation by a ligand. Staurosporine, crizotinib and CH5424802 act as inhibitors of ALK kinase activity. Neuronal receptor tyrosine kinase that is essentially and transiently expressed in specific regions of the central and peripheral nervous systems and plays an important role in the genesis and differentiation of the nervous system. Also acts as a key thinness protein involved in the resistance to weight gain: in hypothalamic neurons, controls energy expenditure acting as a negative regulator of white adipose tissue lipolysis and sympathetic tone to fine-tune energy homeostasis. Following activation by ALKAL2 ligand at the cell surface, transduces an extracellular signal into an intracellular response. In contrast, ALKAL1 is not a potent physiological ligand for ALK. Ligand-binding to the extracellular domain induces tyrosine kinase activation, leading to activation of the mitogen-activated protein kinase (MAPK) pathway. Phosphorylates almost exclusively at the first tyrosine of the Y-x-x-x-Y-Y motif. Induces tyrosine phosphorylation of CBL, FRS2, IRS1 and SHC1, as well as of the MAP kinases MAPK1/ERK2 and MAPK3/ERK1. ALK activation may also be regulated by pleiotrophin (PTN) and midkine (MDK). PTN-binding induces MAPK pathway activation, which is important for the anti-apoptotic signaling of PTN and regulation of cell proliferation. MDK-binding induces phosphorylation of the ALK target insulin receptor substrate (IRS1), activates mitogen-activated protein kinases (MAPKs) and PI3-kinase, resulting also in cell proliferation induction. Drives NF-kappa-B activation, probably through IRS1 and the activation of the AKT serine/threonine kinase. Recruitment of IRS1 to activated ALK and the activation of NF-kappa-B are essential for the autocrine growth and survival signaling of MDK. The chain is ALK tyrosine kinase receptor from Homo sapiens (Human).